Consider the following 406-residue polypeptide: Serine/threonine transporter SstT (406 aa).

Transmembrane regions (helical) follow at residues leucine 15 to serine 35, phenylalanine 47 to isoleucine 67, isoleucine 81 to phenylalanine 101, alanine 140 to leucine 160, phenylalanine 191 to glycine 211, leucine 215 to valine 235, isoleucine 289 to leucine 309, methionine 315 to alanine 335, and isoleucine 362 to threonine 382.

The protein belongs to the dicarboxylate/amino acid:cation symporter (DAACS) (TC 2.A.23) family.

The protein resides in the cell inner membrane. It carries out the reaction L-serine(in) + Na(+)(in) = L-serine(out) + Na(+)(out). The enzyme catalyses L-threonine(in) + Na(+)(in) = L-threonine(out) + Na(+)(out). Functionally, involved in the import of serine and threonine into the cell, with the concomitant import of sodium (symport system). In Vibrio vulnificus (strain YJ016), this protein is Serine/threonine transporter SstT.